Here is a 298-residue protein sequence, read N- to C-terminus: Probable deoxyhypusine synthase 2 (298 aa).

Catalysis depends on Lys-259, which acts as the Nucleophile.

This sequence belongs to the deoxyhypusine synthase family. Requires NAD(+) as cofactor.

The enzyme catalyses [eIF5A protein]-L-lysine + spermidine = [eIF5A protein]-deoxyhypusine + propane-1,3-diamine. It functions in the pathway protein modification; eIF5A hypusination. Catalyzes the NAD-dependent oxidative cleavage of spermidine and the subsequent transfer of the butylamine moiety of spermidine to the epsilon-amino group of a specific lysine residue of the eIF-5A precursor protein to form the intermediate deoxyhypusine residue. This Archaeoglobus fulgidus (strain ATCC 49558 / DSM 4304 / JCM 9628 / NBRC 100126 / VC-16) protein is Probable deoxyhypusine synthase 2 (dys2).